We begin with the raw amino-acid sequence, 87 residues long: Apolipoprotein C-I (87 aa).

Residues 1 to 26 form the signal peptide; that stretch reads MRFILSLPVLAVVLAMVLEGPAPAQA.

Belongs to the apolipoprotein C1 family.

The protein localises to the secreted. Inhibitor of lipoprotein binding to the low density lipoprotein (LDL) receptor, LDL receptor-related protein, and very low density lipoprotein (VLDL) receptor. Associates with high density lipoproteins (HDL) and the triacylglycerol-rich lipoproteins in the plasma and makes up about 10% of the protein of the VLDL and 2% of that of HDL. Appears to interfere directly with fatty acid uptake and is also the major plasma inhibitor of cholesteryl ester transfer protein (CETP). Binds free fatty acids and reduces their intracellular esterification. Modulates the interaction of APOE with beta-migrating VLDL and inhibits binding of beta-VLDL to the LDL receptor-related protein. The polypeptide is Apolipoprotein C-I (APOC1) (Pteropus alecto (Black flying fox)).